The primary structure comprises 87 residues: Small ribosomal subunit protein uS17 (87 aa).

This sequence belongs to the universal ribosomal protein uS17 family. In terms of assembly, part of the 30S ribosomal subunit.

Its function is as follows. One of the primary rRNA binding proteins, it binds specifically to the 5'-end of 16S ribosomal RNA. This chain is Small ribosomal subunit protein uS17, found in Exiguobacterium sibiricum (strain DSM 17290 / CCUG 55495 / CIP 109462 / JCM 13490 / 255-15).